Consider the following 608-residue polypeptide: Dihydroxy-acid dehydratase, chloroplastic (608 aa).

The transit peptide at 1 to 34 directs the protein to the chloroplast; sequence MQATIFSPRATLFPCKPLLPSHNVNSRRPSIISC. S35 carries the N-acetylserine modification. C100 contributes to the [2Fe-2S] cluster binding site. Residue D132 participates in Mg(2+) binding. C173 is a [2Fe-2S] cluster binding site. A Mg(2+)-binding site is contributed by D174. C245 provides a ligand contact to [2Fe-2S] cluster. A Mg(2+)-binding site is contributed by E497. The active-site Proton acceptor is the S523.

This sequence belongs to the IlvD/Edd family. [2Fe-2S] cluster is required as a cofactor. Requires Mg(2+) as cofactor.

It localises to the plastid. It is found in the chloroplast. The catalysed reaction is (2R)-2,3-dihydroxy-3-methylbutanoate = 3-methyl-2-oxobutanoate + H2O. The enzyme catalyses (2R,3R)-2,3-dihydroxy-3-methylpentanoate = (S)-3-methyl-2-oxopentanoate + H2O. The protein operates within amino-acid biosynthesis; L-isoleucine biosynthesis; L-isoleucine from 2-oxobutanoate: step 3/4. It functions in the pathway amino-acid biosynthesis; L-valine biosynthesis; L-valine from pyruvate: step 3/4. Its activity is regulated as follows. Is highly competitively inhibited by the fungal sesquiterpenoid aspterric acid, which is effective as a herbicide in spray applications. Functionally, functions in the biosynthesis of branched-chain amino acids. Catalyzes the dehydration of (2R,3R)-2,3-dihydroxy-3-methylpentanoate (2,3-dihydroxy-3-methylvalerate) into 2-oxo-3-methylpentanoate (2-oxo-3-methylvalerate) and of (2R)-2,3-dihydroxy-3-methylbutanoate (2,3-dihydroxyisovalerate) into 2-oxo-3-methylbutanoate (2-oxoisovalerate), the penultimate precursor to L-isoleucine and L-valine, respectively. In Arabidopsis thaliana (Mouse-ear cress), this protein is Dihydroxy-acid dehydratase, chloroplastic.